Reading from the N-terminus, the 459-residue chain is Sperm-tail PG-rich repeat-containing protein 2 (459 aa).

STPGR repeat units lie at residues 21–30 (VGPGSYQVPF), 63–73 (PGPGHYNVSEA), 119–148 (TLGP…NSSG), 157–203 (GPGP…QEKK), 213–243 (TPAP…FGQS), 257–268 (PGPGFYNVLNNT), 351–377 (PAPG…PRSL), 400–410 (GPGPAAYNPVL), and 433–443 (TPGPATYEISQ).

This is Sperm-tail PG-rich repeat-containing protein 2 (STPG2) from Homo sapiens (Human).